Consider the following 254-residue polypeptide: Phosphoribosylaminoimidazole-succinocarboxamide synthase (254 aa).

It belongs to the SAICAR synthetase family.

The catalysed reaction is 5-amino-1-(5-phospho-D-ribosyl)imidazole-4-carboxylate + L-aspartate + ATP = (2S)-2-[5-amino-1-(5-phospho-beta-D-ribosyl)imidazole-4-carboxamido]succinate + ADP + phosphate + 2 H(+). The protein operates within purine metabolism; IMP biosynthesis via de novo pathway; 5-amino-1-(5-phospho-D-ribosyl)imidazole-4-carboxamide from 5-amino-1-(5-phospho-D-ribosyl)imidazole-4-carboxylate: step 1/2. In Brucella melitensis biotype 2 (strain ATCC 23457), this protein is Phosphoribosylaminoimidazole-succinocarboxamide synthase.